The primary structure comprises 382 residues: Probable G-protein coupled receptor 132 (382 aa).

Over methionine 1–leucine 42 the chain is Extracellular. Asparagine 11 carries N-linked (GlcNAc...) asparagine glycosylation. The helical transmembrane segment at valine 43 to leucine 65 threads the bilayer. Topologically, residues leucine 66–valine 76 are cytoplasmic. Residues tyrosine 77–isoleucine 99 form a helical membrane-spanning segment. Over glutamine 100 to lysine 113 the chain is Extracellular. A disulfide bond links cysteine 112 and cysteine 184. The helical transmembrane segment at valine 114–cysteine 135 threads the bilayer. The Cytoplasmic segment spans residues aspartate 136–threonine 155. A helical membrane pass occupies residues alanine 156 to phenylalanine 175. Topologically, residues aspartate 176–histidine 198 are extracellular. The helical transmembrane segment at tyrosine 199 to phenylalanine 221 threads the bilayer. At arginine 222–serine 241 the chain is on the cytoplasmic side. Residues alanine 242–leucine 261 form a helical membrane-spanning segment. Residues valine 262–threonine 286 lie on the Extracellular side of the membrane. A helical membrane pass occupies residues valine 287–glycine 309. The Cytoplasmic portion of the chain corresponds to threonine 310 to cysteine 382.

It belongs to the G-protein coupled receptor 1 family. Highly expressed in hematopoietic tissues rich in lymphocytes like spleen and thymus. Weakly expressed in heart and lung. Highly expressed in infiltrating macrophages within atherosclerotic lesions.

It is found in the cell membrane. In terms of biological role, may be a receptor for oxidized free fatty acids derived from linoleic and arachidonic acids such as 9-hydroxyoctadecadienoic acid (9-HODE). Activates a G alpha protein, most likely G alpha(q). May be involved in apoptosis. Functions at the G2/M checkpoint to delay mitosis. May function as a sensor that monitors the oxidative states and mediates appropriate cellular responses such as secretion of paracrine signals and attenuation of proliferation. May mediate ths accumulation of intracellular inositol phosphates at acidic pH through proton-sensing activity. The chain is Probable G-protein coupled receptor 132 (Gpr132) from Mus musculus (Mouse).